The chain runs to 62 residues: Conotoxin Pn-B0151 (62 aa).

Positions 1-22 are cleaved as a signal peptide; that stretch reads MRCLPVFVILLLLIASTPSVDA. Positions 23 to 48 are excised as a propeptide; the sequence is LQKTKDDMPLASFHDNVKRILQTLSN.

This sequence belongs to the conotoxin T superfamily. Contains 2 disulfide bonds that can be either 'C1-C3, C2-C4' or 'C1-C4, C2-C3', since these disulfide connectivities have been observed for conotoxins with cysteine framework V (for examples, see AC P0DQQ7 and AC P81755). As to expression, expressed by the venom duct.

It localises to the secreted. This chain is Conotoxin Pn-B0151, found in Conus pennaceus (Feathered cone).